We begin with the raw amino-acid sequence, 36 residues long: Photosystem I reaction center subunit VIII (36 aa).

Residues 8–28 (SVLVPLVGLIFPAMAMASLFL) form a helical membrane-spanning segment.

The protein belongs to the PsaI family.

It localises to the plastid. The protein localises to the chloroplast thylakoid membrane. In terms of biological role, may help in the organization of the PsaL subunit. This chain is Photosystem I reaction center subunit VIII, found in Daucus carota (Wild carrot).